The chain runs to 401 residues: Anhydro-N-acetylmuramic acid kinase (401 aa).

25 to 32 is a binding site for ATP; the sequence is GTSLDGLD.

Belongs to the anhydro-N-acetylmuramic acid kinase family.

It carries out the reaction 1,6-anhydro-N-acetyl-beta-muramate + ATP + H2O = N-acetyl-D-muramate 6-phosphate + ADP + H(+). It participates in amino-sugar metabolism; 1,6-anhydro-N-acetylmuramate degradation. Its pathway is cell wall biogenesis; peptidoglycan recycling. Its function is as follows. Catalyzes the specific phosphorylation of 1,6-anhydro-N-acetylmuramic acid (anhMurNAc) with the simultaneous cleavage of the 1,6-anhydro ring, generating MurNAc-6-P. Is required for the utilization of anhMurNAc either imported from the medium or derived from its own cell wall murein, and thus plays a role in cell wall recycling. The sequence is that of Anhydro-N-acetylmuramic acid kinase from Pseudoalteromonas translucida (strain TAC 125).